A 412-amino-acid chain; its full sequence is Serine hydroxymethyltransferase (412 aa).

(6S)-5,6,7,8-tetrahydrofolate-binding positions include Leu117 and 121–123; that span reads GHL. An N6-(pyridoxal phosphate)lysine modification is found at Lys226. Glu241 provides a ligand contact to (6S)-5,6,7,8-tetrahydrofolate.

Belongs to the SHMT family. In terms of assembly, homodimer. The cofactor is pyridoxal 5'-phosphate.

Its subcellular location is the cytoplasm. It catalyses the reaction (6R)-5,10-methylene-5,6,7,8-tetrahydrofolate + glycine + H2O = (6S)-5,6,7,8-tetrahydrofolate + L-serine. The protein operates within one-carbon metabolism; tetrahydrofolate interconversion. Its pathway is amino-acid biosynthesis; glycine biosynthesis; glycine from L-serine: step 1/1. Its function is as follows. Catalyzes the reversible interconversion of serine and glycine with tetrahydrofolate (THF) serving as the one-carbon carrier. This reaction serves as the major source of one-carbon groups required for the biosynthesis of purines, thymidylate, methionine, and other important biomolecules. Also exhibits THF-independent aldolase activity toward beta-hydroxyamino acids, producing glycine and aldehydes, via a retro-aldol mechanism. In Staphylococcus carnosus (strain TM300), this protein is Serine hydroxymethyltransferase.